Consider the following 129-residue polypeptide: RutC family protein PM1466 (129 aa).

Belongs to the RutC family.

This chain is RutC family protein PM1466, found in Pasteurella multocida (strain Pm70).